The following is a 229-amino-acid chain: Protein N-lysine methyltransferase METTL21D (229 aa).

The residue at position 2 (A2) is an N-acetylalanine. Residue S8 is modified to Phosphoserine. S-adenosyl-L-methionine contacts are provided by residues W43, 75–77 (GSG), D96, W126, A143, and Y148.

This sequence belongs to the methyltransferase superfamily. METTL21 family. Interacts with ALKBH6. Interacts with ASPSCR1 and UBXN6; interaction with ASPSCR1, but not with UBXN6, enhances VCP methylation.

Its subcellular location is the cytoplasm. It catalyses the reaction L-lysyl-[protein] + 3 S-adenosyl-L-methionine = N(6),N(6),N(6)-trimethyl-L-lysyl-[protein] + 3 S-adenosyl-L-homocysteine + 3 H(+). Its function is as follows. Protein N-lysine methyltransferase that specifically trimethylates 'Lys-315' of VCP/p97; this modification may decrease VCP ATPase activity. This Homo sapiens (Human) protein is Protein N-lysine methyltransferase METTL21D (VCPKMT).